We begin with the raw amino-acid sequence, 302 residues long: ARVVLGCWSVLSQAAQTDDEERAGNRRPIWIMGHMVNAIGQIDEFVNLGANSIETDVSFDDNANPEYTYHGIPCDCGRNCKKYENFNDFLKGLRSATTPGNSKYQEKLVLVVFDLKTGSLYDNQANDAGKKLAKNLLQHYWNNGNNGGRAYIVLSIPDLNHYPLIKGFKDQLTKDGHPELMDKVGHDFSGNDDIGDVGKAYKKAGITGHIWQSDGITNCLPRGLSRVNAAVANRDSANGFINKVYYWTVDKRSTTRDALDAGVDGIMTNYPDVITDVLNEAAYKKKFRVATYDDNPWVTFKK.

The N-terminal stretch at 1–14 (ARVVLGCWSVLSQA) is a signal peptide. A propeptide spanning residues 15–22 (AQTDDEER) is cleaved from the precursor. His34 is an active-site residue. Positions 54 and 56 each coordinate Mg(2+). The Nucleophile role is filled by His70. Intrachain disulfides connect Cys74-Cys80 and Cys76-Cys219. Asp114 is a Mg(2+) binding site.

It belongs to the arthropod phospholipase D family. Class II subfamily. Class IIa sub-subfamily. The cofactor is Mg(2+). In terms of tissue distribution, expressed by the venom gland.

The protein resides in the secreted. It catalyses the reaction an N-(acyl)-sphingosylphosphocholine = an N-(acyl)-sphingosyl-1,3-cyclic phosphate + choline. The enzyme catalyses an N-(acyl)-sphingosylphosphoethanolamine = an N-(acyl)-sphingosyl-1,3-cyclic phosphate + ethanolamine. It carries out the reaction a 1-acyl-sn-glycero-3-phosphocholine = a 1-acyl-sn-glycero-2,3-cyclic phosphate + choline. The catalysed reaction is a 1-acyl-sn-glycero-3-phosphoethanolamine = a 1-acyl-sn-glycero-2,3-cyclic phosphate + ethanolamine. Dermonecrotic toxins cleave the phosphodiester linkage between the phosphate and headgroup of certain phospholipids (sphingolipid and lysolipid substrates), forming an alcohol (often choline) and a cyclic phosphate. This toxin acts on sphingomyelin (SM). It may also act on ceramide phosphoethanolamine (CPE), lysophosphatidylcholine (LPC) and lysophosphatidylethanolamine (LPE), but not on lysophosphatidylserine (LPS), and lysophosphatidylglycerol (LPG). It acts by transphosphatidylation, releasing exclusively cyclic phosphate products as second products. Induces hemolysis, dermonecrosis, vascular permeability and platelet aggregation. This Loxosceles intermedia (Brown spider) protein is Dermonecrotic toxin LiSicTox-alphaIA1bii.